The following is an 860-amino-acid chain: MSNSLPVPVSLNEYLAHLPMSDEQRAELAGCKTFAELHERLSAQPVNDPAEAAQASVGRRLTLTTADQLEDAEMLGVDASGRLCLKATPPIRRTKVVPEPWRTNILVRGWRRLTGKTNPPKPEHDDLPRDLPKARWRTVGSIRRYILLILMLGQTIVAGWYMKGILPYQGWSLVSLDEITRQTFVQTALQVMPYALQTSILLLFGILFCWVSAGFWTALMGFLELLTGRDKYRISGASAGNEPIEKGARTALVMPICNEDVPRVFAGLRATFESVAATGDLDRFDFFVLSDTNETDIAVAEQQAWLDVCRETKGFGKIFYRRRRRRVKRKSGNLDDFCRRWGGEYRYMVVLDADSVMSGECLTSLVRLMEATPDAGIIQTAPRASGMDTLYARMQQFATRVYGPLFTAGLHFWQLGESHYWGHNAIIRMKPFIEHCALAPLPGKGAFAGAILSHDFVEAALMRRAGWGVWIAYDLPGSYEELPPNLLDELKRDRRWCHGNLMNFRLFLVKGMHPVHRAVFLTGVMSYLSAPLWFFFLVLSTALLAVNTLMEPTYFLEPRQLYPLWPQWHPEKAVALFSTTIVLLFLPKLLSVILIWAKGAKGFGGKFKVTVSMLLEMLFSVLLAPVRMLFHTRFVLAAFLGWAATWNSPQRDDDSTPWIEAVKRHGPQTLLGACWALLVFWLNPSFLWWLAPIVVSLMLSIPVSVISSRTNLGVKARDEKFFLIPEEFEPPQELISTDQYTYENRWHALKQGFIRAVVDPRQNALACALATSRHRQAQPIEVVRMERVDQALKVGPAKLGNQERLMLLSDPVALGRLHERVWSEGHEEWLAAWRASIEADPHAPLLPLQPVGKASEPVPV.

6 helical membrane passes run 146–166, 200–220, 519–539, 576–596, 610–630, and 686–706; these read ILLI…KGIL, ILLL…TALM, VFLT…FLVL, LFST…ILIW, TVSM…RMLF, and FLWW…VSVI.

The protein belongs to the glycosyltransferase 2 family. OpgH subfamily.

It localises to the cell inner membrane. The protein operates within glycan metabolism; osmoregulated periplasmic glucan (OPG) biosynthesis. Its function is as follows. Involved in the biosynthesis of osmoregulated periplasmic glucans (OPGs). This is Glucans biosynthesis glucosyltransferase H from Pseudomonas savastanoi pv. phaseolicola (strain 1448A / Race 6) (Pseudomonas syringae pv. phaseolicola (strain 1448A / Race 6)).